A 453-amino-acid polypeptide reads, in one-letter code: Acid phosphatase (453 aa).

An N-terminal signal peptide occupies residues 1–18 (MFLQNLFLGFLAVVCANA). H69 (nucleophile) is an active-site residue. N95, N151, N183, N193, N243, and N319 each carry an N-linked (GlcNAc...) asparagine glycan. D331 functions as the Proton donor in the catalytic mechanism. N410, N429, and N443 each carry an N-linked (GlcNAc...) asparagine glycan.

Belongs to the histidine acid phosphatase family.

It localises to the secreted. It is found in the cell wall. The catalysed reaction is a phosphate monoester + H2O = an alcohol + phosphate. The polypeptide is Acid phosphatase (pho1) (Schizosaccharomyces pombe (strain 972 / ATCC 24843) (Fission yeast)).